We begin with the raw amino-acid sequence, 615 residues long: 1-deoxy-D-xylulose-5-phosphate synthase (615 aa).

Thiamine diphosphate is bound by residues H76 and 117-119; that span reads GHS. D148 contributes to the Mg(2+) binding site. Thiamine diphosphate is bound by residues 149-150, N177, Y284, and E365; that span reads GA. N177 serves as a coordination point for Mg(2+).

Belongs to the transketolase family. DXPS subfamily. Homodimer. Mg(2+) is required as a cofactor. It depends on thiamine diphosphate as a cofactor.

It catalyses the reaction D-glyceraldehyde 3-phosphate + pyruvate + H(+) = 1-deoxy-D-xylulose 5-phosphate + CO2. The protein operates within metabolic intermediate biosynthesis; 1-deoxy-D-xylulose 5-phosphate biosynthesis; 1-deoxy-D-xylulose 5-phosphate from D-glyceraldehyde 3-phosphate and pyruvate: step 1/1. Catalyzes the acyloin condensation reaction between C atoms 2 and 3 of pyruvate and glyceraldehyde 3-phosphate to yield 1-deoxy-D-xylulose-5-phosphate (DXP). This is 1-deoxy-D-xylulose-5-phosphate synthase from Francisella tularensis subsp. novicida (strain U112).